The following is a 366-amino-acid chain: Peptide chain release factor 2 (366 aa).

Glutamine 251 carries the N5-methylglutamine modification.

It belongs to the prokaryotic/mitochondrial release factor family. Post-translationally, methylated by PrmC. Methylation increases the termination efficiency of RF2.

The protein localises to the cytoplasm. In terms of biological role, peptide chain release factor 2 directs the termination of translation in response to the peptide chain termination codons UGA and UAA. In Campylobacter lari (strain RM2100 / D67 / ATCC BAA-1060), this protein is Peptide chain release factor 2.